The sequence spans 878 residues: Probable LRR receptor-like serine/threonine-protein kinase MEE39 (878 aa).

The first 25 residues, 1–25 (MKNLCWVFLSLFWFGVFLIIRFAEG), serve as a signal peptide directing secretion. Residues 26–514 (QNQEGFISLD…IDKPKKKVAV (489 aa)) are Extracellular-facing. N-linked (GlcNAc...) asparagine glycans are attached at residues Asn183, Asn203, Asn235, Asn290, Asn404, Asn418, Asn445, and Asn466. LRR repeat units lie at residues 413 to 436 (RIIS…QNLA), 437 to 458 (HLES…FLAT), and 461 to 483 (SLLV…LRDR). Residues 515–535 (KVVAPVASIAAIVVVILLFVF) traverse the membrane as a helical segment. At 536 to 878 (KKKMSSRNKP…FDTDVKPKAR (343 aa)) the chain is on the cytoplasmic side. Thr557 carries the post-translational modification Phosphothreonine. Residues 566–840 (KNLQRPLGEG…QVIINLKECL (275 aa)) enclose the Protein kinase domain. Residues 572 to 580 (LGEGGFGVV) and Lys594 each bind ATP. Tyr639 is subject to Phosphotyrosine. Asp691 (proton acceptor) is an active-site residue. A Phosphoserine modification is found at Ser726. Phosphothreonine occurs at positions 727 and 732. Tyr740 is modified (phosphotyrosine). Over residues 849–869 (RNNQNMDSGHSSDQLNVTVTF) the composition is skewed to polar residues. Residues 849–878 (RNNQNMDSGHSSDQLNVTVTFDTDVKPKAR) are disordered.

It belongs to the protein kinase superfamily. Ser/Thr protein kinase family.

Its subcellular location is the membrane. It catalyses the reaction L-seryl-[protein] + ATP = O-phospho-L-seryl-[protein] + ADP + H(+). The enzyme catalyses L-threonyl-[protein] + ATP = O-phospho-L-threonyl-[protein] + ADP + H(+). Its function is as follows. Receptor-like serine/threonine-kinase required during the endosperm development in seeds. The sequence is that of Probable LRR receptor-like serine/threonine-protein kinase MEE39 (MEE39) from Arabidopsis thaliana (Mouse-ear cress).